Here is a 214-residue protein sequence, read N- to C-terminus: Mexicain (214 aa).

3 cysteine pairs are disulfide-bonded: Cys-22/Cys-63, Cys-56/Cys-95, and Cys-153/Cys-200. Cys-25 is a catalytic residue. Cys-25 lines the E64 pocket. Catalysis depends on residues His-159 and Asn-175.

It belongs to the peptidase C1 family. In terms of tissue distribution, expressed in latex.

The protein resides in the secreted. Functionally, cysteine protease. This chain is Mexicain, found in Jacaratia mexicana (Wild papaya).